The sequence spans 117 residues: Large ribosomal subunit protein uL18 (117 aa).

The protein belongs to the universal ribosomal protein uL18 family. In terms of assembly, part of the 50S ribosomal subunit; part of the 5S rRNA/L5/L18/L25 subcomplex. Contacts the 5S and 23S rRNAs.

Its function is as follows. This is one of the proteins that bind and probably mediate the attachment of the 5S RNA into the large ribosomal subunit, where it forms part of the central protuberance. The sequence is that of Large ribosomal subunit protein uL18 from Photorhabdus laumondii subsp. laumondii (strain DSM 15139 / CIP 105565 / TT01) (Photorhabdus luminescens subsp. laumondii).